A 52-amino-acid chain; its full sequence is uncharacterized protein (52 aa).

The disordered stretch occupies residues 24-52; the sequence is LRENPSKNVRTIPDAGDENSSFGHARVIA.

This is an uncharacterized protein from Treponema pallidum (strain Nichols).